Here is a 151-residue protein sequence, read N- to C-terminus: Large ribosomal subunit protein uL15 (151 aa).

The tract at residues 1–45 (MNLSSLKPVKGSTKTCKRVGRGQGSGCGGTSTRGHKGQKSRSGYS) is disordered. Positions 21-31 (RGQGSGCGGTS) are enriched in gly residues.

This sequence belongs to the universal ribosomal protein uL15 family. Part of the 50S ribosomal subunit.

Functionally, binds to the 23S rRNA. The protein is Large ribosomal subunit protein uL15 of Azobacteroides pseudotrichonymphae genomovar. CFP2.